A 129-amino-acid polypeptide reads, in one-letter code: MMARRTKARKKEKKHVEQGVAHIKSTFNNTIVTITDPQGNTLSWASAGTVGFEGTRKGTPFAAQLAAEKAAKEAMEFGVKTVEVYVKGPGAGREAAIRSLQAAGLEVSLIKDVTPIPHNGCRPPKRRRV.

The protein belongs to the universal ribosomal protein uS11 family. In terms of assembly, part of the 30S ribosomal subunit. Interacts with proteins S7 and S18. Binds to IF-3.

Its function is as follows. Located on the platform of the 30S subunit, it bridges several disparate RNA helices of the 16S rRNA. Forms part of the Shine-Dalgarno cleft in the 70S ribosome. The polypeptide is Small ribosomal subunit protein uS11 (Carboxydothermus hydrogenoformans (strain ATCC BAA-161 / DSM 6008 / Z-2901)).